The chain runs to 126 residues: MELPLLDKLKVRDLVDKRFSHLFETVSLLSGDNEEDNEDQLRLKNSIKNLREHLTEKEEEIRQLHDVISVKNRDAERLNDELISINIENNLLQERLTHIQAEYDTLIERWLLKAQREADIMNTRLK.

Residues 32 to 109 (DNEEDNEDQL…QAEYDTLIER (78 aa)) adopt a coiled-coil conformation.

The protein belongs to the ATG16 family. As to quaternary structure, homodimer. Part of the ATG5-ATG12/ATG16 complex. Several units of each may be present in this complex.

The protein localises to the preautophagosomal structure membrane. In terms of biological role, stabilizes the ATG5-ATG12 conjugate which is necessary for autophagy. The ATG5-ATG12/ATG16 complex is required for efficient promotion of ATG8-conjugation to phosphatidylethanolamine and ATG8 localization to the pre-autophagosomal structure (PAS). Also recruits ATG3 to the PAS. Involved in endoplasmic reticulum-specific autophagic process and is essential for the survival of cells subjected to severe ER stress. This Kluyveromyces lactis (strain ATCC 8585 / CBS 2359 / DSM 70799 / NBRC 1267 / NRRL Y-1140 / WM37) (Yeast) protein is Autophagy protein 16 (ATG16).